The chain runs to 247 residues: Fasciclin-like arabinogalactan protein 13 (247 aa).

Positions methionine 1–alanine 25 are cleaved as a signal peptide. The FAS1 domain occupies proline 34 to leucine 179. Residues asparagine 36, asparagine 55, asparagine 68, asparagine 141, and asparagine 150 are each glycosylated (N-linked (GlcNAc...) asparagine). The disordered stretch occupies residues lysine 189–methionine 228. Glycine 224 is lipidated: GPI-anchor amidated glycine. A propeptide spans serine 225–leucine 247 (removed in mature form).

This sequence belongs to the fasciclin-like AGP family.

It is found in the cell membrane. May be a cell surface adhesion protein. This chain is Fasciclin-like arabinogalactan protein 13 (FLA13), found in Arabidopsis thaliana (Mouse-ear cress).